Consider the following 1216-residue polypeptide: Apical endosomal glycoprotein (1216 aa).

An N-terminal signal peptide occupies residues 1-22; that stretch reads MPLSSHLLPALVLFLAGSSGWA. Residues 23–1151 lie on the Extracellular side of the membrane; that stretch reads WVPNHCRSPG…SPGNTAAPGS (1129 aa). The LDL-receptor class A 1; truncated domain occupies 26-53; sequence NHCRSPGQAVCNFVCDCRDCSDEAQCGY. The 159-residue stretch at 64–222 folds into the MAM 1 domain; the sequence is FACDFEQDPC…DDLEFWDCGL (159 aa). Residue Asn-203 is glycosylated (N-linked (GlcNAc...) asparagine). The LDL-receptor class A 2 domain occupies 228–266; the sequence is NCPPGHHHCQNKVCVEPQQLCDGEDNCGDLSDENPLTCG. 3 disulfides stabilise this stretch: Cys-229/Cys-241, Cys-236/Cys-254, and Cys-248/Cys-265. The region spanning 269 to 425 is the MAM 2 domain; the sequence is IATDFETGLG…DLILSDHCRP (157 aa). Residues 280 to 307 form a disordered region; it reads WNRSEGWSRNHRAGGPERPSWPRRDHSR. N-linked (GlcNAc...) asparagine glycans are attached at residues Asn-281 and Asn-339. The interval 429-455 is disordered; it reads VSTLQPLPPGPRAPAPQPLPPSSRLQD. A compositionally biased stretch (pro residues) spans 434–449; sequence PLPPGPRAPAPQPLPP. The LDL-receptor class A 3 domain occupies 456–491; that stretch reads SCKQGHLACGDLCVPPEQLCDFEEQCAGGEDEQACG. 3 disulfides stabilise this stretch: Cys-457–Cys-468, Cys-464–Cys-481, and Cys-475–Cys-490. 4 consecutive MAM domains span residues 491–644, 654–809, 811–969, and 971–1138; these read GTTD…DCSP, VSCN…PCWA, NYCS…PCPQ, and GSCD…HCQQ. Asn-583 and Asn-636 each carry an N-linked (GlcNAc...) asparagine glycan. The N-linked (GlcNAc...) asparagine glycan is linked to Asn-835. The chain crosses the membrane as a helical span at residues 1152–1172; the sequence is VPAVVGSALLLLMLLVLLGLG. Topologically, residues 1173–1216 are cytoplasmic; sequence GRRWLQKKGSCPFQSNTEATAPGFDNILFNADGVTLPASVTSDP.

It localises to the membrane. Probably involved in the sorting and selective transport of receptors and ligands across polarized epithelia. The protein is Apical endosomal glycoprotein of Homo sapiens (Human).